We begin with the raw amino-acid sequence, 318 residues long: DNA repair nuclease/redox regulator APEX1 (318 aa).

Residues 1–33 (MPKRGKKGAVAEDGDELRTEPEAKKSKTAAKKN) are necessary for interaction with YBX1, binding to RNA, association together with NPM1 to rRNA, endoribonuclease activity on abasic RNA and localization in the nucleoli. The segment at 1–60 (MPKRGKKGAVAEDGDELRTEPEAKKSKTAAKKNDKEAAGEGPALYEDPPDQKTSPSGKPA) is disordered. N6-acetyllysine; by EP300 is present on residues lysine 6 and lysine 7. The Nuclear localization signal (NLS) signature appears at 8–13 (GAVAED). The segment covering 16–38 (ELRTEPEAKKSKTAAKKNDKEAA) has biased composition (basic and acidic residues). The segment at 23–33 (AKKSKTAAKKN) is necessary for interaction with NPM1 and for efficient rRNA binding. Residues lysine 27, lysine 31, lysine 32, and lysine 35 each carry the N6-acetyllysine modification. At serine 54 the chain carries Phosphoserine. The short motif at 64–80 (ICSWNVDGLRAWIKKKG) is the Nuclear export signal (NES) element. Cysteine 65 carries the post-translational modification S-nitrosocysteine; alternate. A disulfide bridge connects residues cysteine 65 and cysteine 93. Residue aspartate 70 participates in Mg(2+) binding. Residue cysteine 93 is modified to S-nitrosocysteine; alternate. Glutamate 96 lines the Mg(2+) pocket. Residue tyrosine 171 is part of the active site. Lysine 197 carries the post-translational modification N6-acetyllysine. The Mg(2+) site is built by aspartate 210 and asparagine 212. Aspartate 210 (proton donor/acceptor) is an active-site residue. Phosphothreonine; by CDK5 is present on threonine 233. Residues 289–318 (HSLLPALCDSKIRSKALGSDHCPITLYLAL) form a mitochondrial targeting sequence (MTS) region. Residue aspartate 308 coordinates Mg(2+). Position 310 is an S-nitrosocysteine (cysteine 310).

The protein belongs to the DNA repair enzymes AP/ExoA family. In terms of assembly, monomer. Homodimer; disulfide-linked. Component of the SET complex, composed of at least APEX1, SET, ANP32A, HMGB2, NME1 and TREX1. Associates with the dimer XRCC5/XRCC6 in a DNA-dependent manner. Interacts with SIRT1; the interaction is increased in the context of genotoxic stress. Interacts with HDAC1, HDAC2 and HDAC3; the interactions are not dependent on the APEX1 acetylation status. Interacts with XRCC1; the interaction is induced by SIRT1 and increased with the APEX1 acetylated form. Interacts with NPM1 (via N-terminal domain); the interaction is RNA-dependent and decreases in hydrogen peroxide-damaged cells. Interacts (via N-terminus) with YBX1 (via C-terminus); the interaction is increased in presence of APEX1 acetylated at Lys-6 and Lys-7. Interacts with HNRNPL; the interaction is DNA-dependent. Interacts (via N-terminus) with KPNA1 and KPNA2. Interacts with TXN; the interaction stimulates the FOS/JUN AP-1 complex DNA-binding activity in a redox-dependent manner. Interacts with GZMA, KRT8, MDM2, POLB, PRDX6, PRPF19, RPLP0, TOMM20 and WDR77. Binds to CDK5. Mg(2+) serves as cofactor. Mn(2+) is required as a cofactor. Post-translationally, phosphorylated. Phosphorylation by kinase PKC or casein kinase CK2 results in enhanced redox activity that stimulates binding of the FOS/JUN AP-1 complex to its cognate binding site. AP-endodeoxyribonuclease activity is not affected by CK2-mediated phosphorylation. Phosphorylation of Thr-233 by CDK5 in response to MPP(+)/MPTP (1-methyl-4-phenylpyridinium) reduces AP-endodeoxyribonuclease activity resulting in accumulation of DNA damage and contributing to neuronal death. Acetylated on Lys-6 and Lys-7. Acetylation is increased by the transcriptional coactivator EP300 acetyltransferase, genotoxic agents like H(2)O(2) and methyl methanesulfonate (MMS). Acetylation increases its binding affinity to the negative calcium response element (nCaRE) DNA promoter. The acetylated form induces a stronger binding of YBX1 to the Y-box sequence in the MDR1 promoter than the unacetylated form. Deacetylated on lysines. Lys-6 and Lys-7 are deacetylated by SIRT1. In terms of processing, cleaved at Lys-31 by granzyme A to create the mitochondrial form; leading in reduction of binding to DNA, AP endodeoxyribonuclease activity, redox activation of transcription factors and to enhanced cell death. Cleaved by granzyme K; leading to intracellular ROS accumulation and enhanced cell death after oxidative stress. Post-translationally, cys-69 and Cys-93 are nitrosylated in response to nitric oxide (NO) and lead to the exposure of the nuclear export signal (NES). Ubiquitinated by MDM2; leading to translocation to the cytoplasm and proteasomal degradation.

The protein localises to the nucleus. It is found in the nucleolus. The protein resides in the nucleus speckle. Its subcellular location is the endoplasmic reticulum. It localises to the cytoplasm. The protein localises to the mitochondrion. It carries out the reaction a deoxyribonucleotide-2'-deoxyribose-5'-monophosphate-DNA + H2O = a 5'-end 2'-deoxyribose-5'-monophosphate-DNA + a 3'-end 2'-deoxyribonucleotide-DNA + H(+). It catalyses the reaction Exonucleolytic cleavage in the 3'- to 5'-direction to yield nucleoside 5'-phosphates.. The catalysed reaction is a 3'-end 2'-deoxyribonucleotide-3'-phosphoglycolate-DNA + H2O = 2-phosphoglycolate + a 3'-end 2'-deoxyribonucleotide-DNA + H(+). The enzyme catalyses a 3'-end 2'-deoxyribonucleotide-8-oxoguanine-DNA + H2O = 8-oxo-dGMP + a 3'-end 2'-deoxyribonucleotide-DNA + H(+). NPM1 stimulates endodeoxyribonuclease activity on double-stranded DNA with AP sites, but inhibits endoribonuclease activity on single-stranded RNA containing AP sites. Functionally, multifunctional protein that plays a central role in the cellular response to oxidative stress. The two major activities of APEX1 are DNA repair and redox regulation of transcriptional factors. Functions as an apurinic/apyrimidinic (AP) endodeoxyribonuclease in the base excision repair (BER) pathway of DNA lesions induced by oxidative and alkylating agents. Initiates repair of AP sites in DNA by catalyzing hydrolytic incision of the phosphodiester backbone immediately adjacent to the damage, generating a single-strand break with 5'-deoxyribose phosphate and 3'-hydroxyl ends. Also incises at AP sites in the DNA strand of DNA/RNA hybrids, single-stranded DNA regions of R-loop structures, and single-stranded RNA molecules. Operates at switch sites of immunoglobulin (Ig) constant regions where it mediates Ig isotype class switch recombination. Processes AP sites induced by successive action of AICDA and UNG. Generates staggered nicks in opposite DNA strands resulting in the formation of double-strand DNA breaks that are finally resolved via non-homologous end joining repair pathway. Has 3'-5' exodeoxyribonuclease activity on mismatched deoxyribonucleotides at the 3' termini of nicked or gapped DNA molecules during short-patch BER. Possesses DNA 3' phosphodiesterase activity capable of removing lesions (such as phosphoglycolate and 8-oxoguanine) blocking the 3' side of DNA strand breaks. Also acts as an endoribonuclease involved in the control of single-stranded RNA metabolism. Plays a role in regulating MYC mRNA turnover by preferentially cleaving in between UA and CA dinucleotides of the MYC coding region determinant (CRD). In association with NMD1, plays a role in the rRNA quality control process during cell cycle progression. Acts as a loading factor for POLB onto non-incised AP sites in DNA and stimulates the 5'-terminal deoxyribose 5'-phosphate (dRp) excision activity of POLB. Exerts reversible nuclear redox activity to regulate DNA binding affinity and transcriptional activity of transcriptional factors by controlling the redox status of their DNA-binding domain, such as the FOS/JUN AP-1 complex after exposure to IR. Involved in calcium-dependent down-regulation of parathyroid hormone (PTH) expression by binding to negative calcium response elements (nCaREs). Together with HNRNPL or the dimer XRCC5/XRCC6, associates with nCaRE, acting as an activator of transcriptional repression. May also play a role in the epigenetic regulation of gene expression by participating in DNA demethylation. Stimulates the YBX1-mediated MDR1 promoter activity, when acetylated at Lys-6 and Lys-7, leading to drug resistance. Plays a role in protection from granzyme-mediated cellular repair leading to cell death. Binds DNA and RNA. Associates, together with YBX1, on the MDR1 promoter. Together with NPM1, associates with rRNA. This is DNA repair nuclease/redox regulator APEX1 (APEX1) from Pan paniscus (Pygmy chimpanzee).